The sequence spans 380 residues: Ubiquitin-like protein 7 (380 aa).

Residues 18–98 (TPKSILRLPE…VLRKSWPEPD (81 aa)) enclose the Ubiquitin-like domain. Residues 200–313 (APMPGTDSSS…SSGVQSGTPI (114 aa)) are disordered. Positions 206–221 (DSSSRSMPSSSYRDMP) are enriched in low complexity. Phosphoserine is present on serine 230. Low complexity-rich tracts occupy residues 240 to 253 (TRSTPSSSTPSSRP) and 270 to 293 (SELATALALASTPESSSHTPTPGT). A compositionally biased stretch (polar residues) spans 294 to 313 (QGHSSGTSPMSSGVQSGTPI). Positions 333 to 377 (SLQSQWQPQLQQLRDMGIQDDELSLRALQATGGDIQAALELIFAG) constitute a UBA domain.

As to quaternary structure, binds ubiquitin. Interacts with MAVS; this interaction enhances TRIM21-dependent 'Lys-27'-linked polyubiquitination of MAVS. Deubiquitinated by OTUD4 which stabilizes UBL7 expression. In terms of tissue distribution, ubiquitous. Highly expressed in heart, skeletal muscle, testis, thyroid and adrenal gland.

Interferon-stimulated protein that positively regulates RNA virus-triggered innate immune signaling. Mechanistically, promotes 'Lys-27'-linked polyubiquitination of MAVS through TRIM21 leading to enhanced the IFN signaling pathway. The protein is Ubiquitin-like protein 7 (UBL7) of Homo sapiens (Human).